We begin with the raw amino-acid sequence, 304 residues long: Xylanase inhibitor protein 1 (304 aa).

The first 30 residues, 1–30, serve as a signal peptide directing secretion; sequence MAPLAARRPACLLALLSVAAALFLTPTALA. The 269-residue stretch at 36–304 folds into the GH18 domain; the sequence is GQVTVFWGRN…NYSSLIKYYA (269 aa). The cysteines at positions 55 and 96 are disulfide-linked. Residue asparagine 119 is glycosylated (N-linked (GlcNAc...) asparagine). The Proton donor role is filled by glutamate 158. Positions 178–184 are interaction with fungal GH11 xylanase; the sequence is IRGGPGK. Cysteines 194 and 225 form a disulfide. The interaction with fungal GH10 xylanase stretch occupies residues 262–275; it reads HPKNVYYGVAPVAQ. Asparagine 295 is a glycosylation site (N-linked (GlcNAc...) asparagine).

The protein belongs to the glycosyl hydrolase 18 family. Xylanase inhibitor subfamily. Binds to fungal GH10 and GH11 xylanases. Also forms a ternary complex with barley alpha-amylase 1 (AMY1) and insoluble starch.

The protein localises to the secreted. Functionally, fungal xylanase inhibitor. Possesses competitive inhibiting activity against fungal endo-1,4-beta-D-xylanases belonging to glycoside hydrolase family 10 (GH10) and family 11 (GH11). Possesses also inhibitory activity towards barley alpha-amylases. Binding to xylanases or amylases is necessary for inhibition activity. May function in plant defense against secreted fungal pathogen xylanases. Is similar to class III chitinases, but does not exhibit chitinase activity. The sequence is that of Xylanase inhibitor protein 1 from Triticum aestivum (Wheat).